A 211-amino-acid polypeptide reads, in one-letter code: Thiamine-phosphate synthase (211 aa).

4-amino-2-methyl-5-(diphosphooxymethyl)pyrimidine contacts are provided by residues 37–41 and Asn69; that span reads QLRIK. Mg(2+)-binding residues include Asp70 and Asp89. Ser108 provides a ligand contact to 4-amino-2-methyl-5-(diphosphooxymethyl)pyrimidine. A 2-[(2R,5Z)-2-carboxy-4-methylthiazol-5(2H)-ylidene]ethyl phosphate-binding site is contributed by 134–136; the sequence is TQT. A 4-amino-2-methyl-5-(diphosphooxymethyl)pyrimidine-binding site is contributed by Lys137. Residues Gly166 and 186–187 each bind 2-[(2R,5Z)-2-carboxy-4-methylthiazol-5(2H)-ylidene]ethyl phosphate; that span reads VS.

It belongs to the thiamine-phosphate synthase family. The cofactor is Mg(2+).

The catalysed reaction is 2-[(2R,5Z)-2-carboxy-4-methylthiazol-5(2H)-ylidene]ethyl phosphate + 4-amino-2-methyl-5-(diphosphooxymethyl)pyrimidine + 2 H(+) = thiamine phosphate + CO2 + diphosphate. It catalyses the reaction 2-(2-carboxy-4-methylthiazol-5-yl)ethyl phosphate + 4-amino-2-methyl-5-(diphosphooxymethyl)pyrimidine + 2 H(+) = thiamine phosphate + CO2 + diphosphate. The enzyme catalyses 4-methyl-5-(2-phosphooxyethyl)-thiazole + 4-amino-2-methyl-5-(diphosphooxymethyl)pyrimidine + H(+) = thiamine phosphate + diphosphate. It functions in the pathway cofactor biosynthesis; thiamine diphosphate biosynthesis; thiamine phosphate from 4-amino-2-methyl-5-diphosphomethylpyrimidine and 4-methyl-5-(2-phosphoethyl)-thiazole: step 1/1. In terms of biological role, condenses 4-methyl-5-(beta-hydroxyethyl)thiazole monophosphate (THZ-P) and 2-methyl-4-amino-5-hydroxymethyl pyrimidine pyrophosphate (HMP-PP) to form thiamine monophosphate (TMP). This chain is Thiamine-phosphate synthase, found in Enterobacter sp. (strain 638).